Consider the following 243-residue polypeptide: Protein YagJ (243 aa).

This Escherichia coli (strain K12) protein is Protein YagJ (yagJ).